A 544-amino-acid chain; its full sequence is MAASSANKSRPLANFHPTVWGYHFLSYTHEITNQEKVEVDEYKETIRKMLVEAPEGSEQKLVLIDAMQRLGVAYHFHNEIETSIQNIFDAPKQNNNLHIVSLHFRLVRQQGHYMSSDVFKQFTNQDGKFKERLTNDVQGLLSLYEASYLRVRDEEILEEALAFTTTHLKSIVSNMSNNNNSLKVEVSEALTQPIRMTLPRMEARRYISIYENNDAHNHLLLKFAKLDFNMLQKLHQRELSDLTRWWKDLDFANKYPYARDRLVECYFWILGVYFEPKYSRARKMMTKVLKMTSIIDDTFDAYATFDELEPFNDAIQRWDANAIDSIQPYMRPAYQAFLDIYSEMEQVLSKEGKLDRVYYAKNEMKKLVRAYFKETQWLNDCDHIPKYEEHMENSLVSGGYMMIPTTCLVGMEEFISIETFEWLMNDPLIVRASSLIARAMNDIVGHEVEQERGHVASLIECYMKDYGASKQEAYAKFKKDVTNAWKDINKEFFRPTEVPMFVLERVLNLTRAADTLYKEKDAYTNAKGKLKNMINSILIESVKI.

The Mg(2+) site is built by Asp296, Asp300, and Glu449. Residues 296-300 carry the DDXXD motif motif; it reads DDTFD.

This sequence belongs to the terpene synthase family. Tpsa subfamily. Mg(2+) serves as cofactor. It depends on Mn(2+) as a cofactor.

The catalysed reaction is (2E,6E)-farnesyl diphosphate = (1E,4E)-germacrene B + diphosphate. It carries out the reaction (2E)-geranyl diphosphate = terpinolene + diphosphate. It catalyses the reaction (2E)-geranyl diphosphate = limonene + diphosphate. The enzyme catalyses (2E)-geranyl diphosphate = beta-myrcene + diphosphate. The catalysed reaction is (2Z,6Z)-farnesyl diphosphate = germacrene A + diphosphate. It carries out the reaction (2Z,6Z)-farnesyl diphosphate = alpha-humulene + diphosphate. Its pathway is secondary metabolite biosynthesis; terpenoid biosynthesis. In terms of biological role, sesquiterpene synthase involved in the biosynthesis of volatile compounds. Mediates the conversion of (2E,6E)-farnesyl diphosphate (FPP) into (1E,4E)-germacrene B, but also smaller amounts of germacrene A and C, and of (2Z,6Z)-farnesyl diphosphate ((ZZ)-FPP) into alpha-humulene, germacrene A and germacrene B. Can act with a low efficiency as a monoterpene synthase with geranyl diphosphate (GPP) as substrate, thus producing beta-myrcene, limonene and terpinolene. The sequence is that of Terpene synthase 9 from Solanum habrochaites (Wild tomato).